The chain runs to 356 residues: MAESPTEEAATATAGAGAAGPGASGVAGVVGVSGSGGGFGPPFLPDVWAAAAAAGGAGGPGSGLAPLPGLPPSAAAHGAALLSHWDPTLSSDWDGERTAPQCLLRIKRDIMSIYKEPPPGMFVVPDTVDMTKIHALITGPFDTPYEGGFFLFVFRCPPDYPIHPPRVKLMTTGNNTVRFNPNFYRNGKVCLSILGTWTGPAWSPAQSISSVLISIQSLMTENPYHNEPGFEQERHPGDSKNYNECIRHETIRVAVCDMMEGKCPCPEPLRGVMEKSFLEYYDFYEVACKDRLHLQGQTMQDPFGEKRGHFDYQSLLMRLGLIRQKVLERLHNENAEMDSDSSSSGTETDLHGSLRV.

Residues 1-16 (MAESPTEEAATATAGA) are compositionally biased toward low complexity. The segment at 1-22 (MAESPTEEAATATAGAGAAGPG) is disordered. Residues 101 to 255 (QCLLRIKRDI…IRHETIRVAV (155 aa)) enclose the UBC core domain. Catalysis depends on Cys190, which acts as the Glycyl thioester intermediate. Residues 334–356 (NAEMDSDSSSSGTETDLHGSLRV) are disordered. Ser339 carries the phosphoserine modification.

The protein belongs to the ubiquitin-conjugating enzyme family.

Its subcellular location is the cytoplasm. It localises to the nucleus. The catalysed reaction is S-ubiquitinyl-[E1 ubiquitin-activating enzyme]-L-cysteine + [E2 ubiquitin-conjugating enzyme]-L-cysteine = [E1 ubiquitin-activating enzyme]-L-cysteine + S-ubiquitinyl-[E2 ubiquitin-conjugating enzyme]-L-cysteine.. Its pathway is protein modification; protein ubiquitination. Catalyzes the covalent attachment of ubiquitin to other proteins. Specific substrate for UBA6, not charged with ubiquitin by UBE1. May be involved in apoptosis regulation. This is Ubiquitin-conjugating enzyme E2 Z (Ube2z) from Rattus norvegicus (Rat).